Reading from the N-terminus, the 310-residue chain is tRNA-cytidine(32) 2-sulfurtransferase (310 aa).

The PP-loop motif signature appears at serine 45–serine 50. Cysteine 120, cysteine 123, and cysteine 211 together coordinate [4Fe-4S] cluster.

Belongs to the TtcA family. In terms of assembly, homodimer. Mg(2+) serves as cofactor. Requires [4Fe-4S] cluster as cofactor.

It is found in the cytoplasm. It catalyses the reaction cytidine(32) in tRNA + S-sulfanyl-L-cysteinyl-[cysteine desulfurase] + AH2 + ATP = 2-thiocytidine(32) in tRNA + L-cysteinyl-[cysteine desulfurase] + A + AMP + diphosphate + H(+). It participates in tRNA modification. Catalyzes the ATP-dependent 2-thiolation of cytidine in position 32 of tRNA, to form 2-thiocytidine (s(2)C32). The sulfur atoms are provided by the cysteine/cysteine desulfurase (IscS) system. This Shewanella sp. (strain ANA-3) protein is tRNA-cytidine(32) 2-sulfurtransferase.